A 110-amino-acid chain; its full sequence is Multidrug transporter EmrE (110 aa).

A run of 4 helical transmembrane segments spans residues 4–21 (YIYL…TTLM), 34–52 (VGTI…QTLA), 58–80 (IAYA…GFFG), and 87–104 (AIIG…INLL).

This sequence belongs to the drug/metabolite transporter (DMT) superfamily. Small multidrug resistance (SMR) (TC 2.A.7.1) family. Homodimer. Forms an antiparallel dimeric structure. Also forms dimers of homodimers.

Its subcellular location is the cell inner membrane. Its activity is regulated as follows. Substrate identity influences both the ground-state and transition-state energies for the conformational exchange process, emphasizing the coupling between substrate binding and transport. In terms of biological role, multidrug efflux protein that confers resistance to a wide range of toxic compounds, including ethidium, methyl viologen, acriflavine, tetraphenylphosphonium (TPP(+)), benzalkonium, propidium, dequalinium and the aminoglycoside antibiotics streptomycin and tobramycin. Can also transport the osmoprotectants betaine and choline. The drug efflux is coupled to an influx of protons. Can couple antiport of a drug to either one or two protons, performing both electrogenic and electroneutral transport of a single substrate. Simultaneously binds and cotransports proton and drug. The chain is Multidrug transporter EmrE (emrE) from Escherichia coli (strain K12).